The primary structure comprises 534 residues: MIERWLYSTNAKDIAVLYFIFAIFCGMAGTAMSLIIRLELAAPGNQVLSGNHQLFNVLVVGHAVLIIFFLVMPALIGGFGNYMLPLLIGASDMSFARLNNISFWCLPPALVCLVTSTLVESGAGTGWTVYPPLSSIQAHSGPSVDLAIFALHLTSISSLLGAINFIVTTLNMRTNGMTMHRLPLFVWSIFITAFLLLLSLPVLSAGVTMLLLDRNFNTSFFEVAGGGDPVLYQHLFWFFGHPEVYILIIPGFGIISHIVSTYSKKPVFGEVSMVYAMASIGLLGFLVWSHHMYIVGLDADTRAYFTSATMIIAIPTGIKIFSWLATIYGGSIRLAVPMLYAIAFLFLFTIGGLTGVALANASLDVAFHDTYYVVGHFHYVLSMGAIFSLFAGYYYWSPQILGLYYNEKLAQIQFWLIFVGANVIFLPMHFLGVNGMPRRIPDYPDAFAGWNYVASIGSIIAVFSLFLFIYILYDQLVNGLENKVNNKSVIYNKGPDFVESNQIFATNKIKSSSIEFLLTSPPAVHTFNTPAVQS.

The chain crosses the membrane as a helical span at residues 16 to 36 (VLYFIFAIFCGMAGTAMSLII). Glutamate 39, alanine 42, and glycine 44 together coordinate Ca(2+). 6 consecutive transmembrane segments (helical) span residues 57-77 (VLVV…ALIG), 101-121 (ISFW…LVES), 147-167 (AIFA…NFIV), 182-202 (LPLF…SLPV), 235-255 (LFWF…FGII), and 267-287 (VFGE…GFLV). Histidine 62 serves as a coordination point for Fe(II)-heme a. Histidine 241 is a Cu cation binding site. The 1'-histidyl-3'-tyrosine (His-Tyr) cross-link spans 241-245 (HPEVY). Tyrosine 245 is a binding site for O2. The Cu cation site is built by histidine 290 and histidine 291. 2 helical membrane passes run 310 to 330 (MIIA…IYGG) and 338 to 358 (MLYA…GVAL). Mg(2+)-binding residues include histidine 368 and aspartate 369. The next 2 membrane-spanning stretches (helical) occupy residues 372–392 (YVVG…LFAG) and 412–432 (IQFW…HFLG). A heme a3-binding site is contributed by histidine 376. Residue histidine 378 coordinates Fe(II)-heme a. Proline 441 lines the Ca(2+) pocket. The chain crosses the membrane as a helical span at residues 452–472 (YVASIGSIIAVFSLFLFIYIL).

It belongs to the heme-copper respiratory oxidase family. As to quaternary structure, component of the cytochrome c oxidase (complex IV, CIV), a multisubunit enzyme composed of a catalytic core of 3 subunits and several supernumerary subunits. The complex exists as a monomer or a dimer and forms supercomplexes (SCs) in the inner mitochondrial membrane with ubiquinol-cytochrome c oxidoreductase (cytochrome b-c1 complex, complex III, CIII). Heme is required as a cofactor. The cofactor is Cu cation.

Its subcellular location is the mitochondrion inner membrane. The catalysed reaction is 4 Fe(II)-[cytochrome c] + O2 + 8 H(+)(in) = 4 Fe(III)-[cytochrome c] + 2 H2O + 4 H(+)(out). It functions in the pathway energy metabolism; oxidative phosphorylation. Functionally, component of the cytochrome c oxidase, the last enzyme in the mitochondrial electron transport chain which drives oxidative phosphorylation. The respiratory chain contains 3 multisubunit complexes succinate dehydrogenase (complex II, CII), ubiquinol-cytochrome c oxidoreductase (cytochrome b-c1 complex, complex III, CIII) and cytochrome c oxidase (complex IV, CIV), that cooperate to transfer electrons derived from NADH and succinate to molecular oxygen, creating an electrochemical gradient over the inner membrane that drives transmembrane transport and the ATP synthase. Cytochrome c oxidase is the component of the respiratory chain that catalyzes the reduction of oxygen to water. Electrons originating from reduced cytochrome c in the intermembrane space (IMS) are transferred via the dinuclear copper A center (CU(A)) of subunit 2 and heme A of subunit 1 to the active site in subunit 1, a binuclear center (BNC) formed by heme A3 and copper B (CU(B)). The BNC reduces molecular oxygen to 2 water molecules using 4 electrons from cytochrome c in the IMS and 4 protons from the mitochondrial matrix. This Kluyveromyces lactis (strain ATCC 8585 / CBS 2359 / DSM 70799 / NBRC 1267 / NRRL Y-1140 / WM37) (Yeast) protein is Cytochrome c oxidase subunit 1 (COX1).